The sequence spans 955 residues: Protein MEI2-like 3 (955 aa).

The tract at residues 64–83 (IQPNGANHAGDPETPGGQAF) is disordered. RRM domains are found at residues 270–343 (RTLV…FSFP) and 355–428 (GMLV…LSQH). Disordered stretches follow at residues 436–465 (RQQHSREWKQDSLPHQPKNSSPGTIGKLGT) and 897–955 (NAGD…LEQT). Over residues 935 to 955 (DQESNSVGTANSTCRTTLEQT) the composition is skewed to polar residues.

Functionally, probable RNA-binding protein that may play a role in growth regulation. The protein is Protein MEI2-like 3 (ML3) of Oryza sativa subsp. japonica (Rice).